The chain runs to 189 residues: Protein GrpE (189 aa).

Residues 1–24 (MADEQTVDTQNPEANQAPEASGDD) are disordered.

Belongs to the GrpE family. As to quaternary structure, homodimer.

Its subcellular location is the cytoplasm. Its function is as follows. Participates actively in the response to hyperosmotic and heat shock by preventing the aggregation of stress-denatured proteins, in association with DnaK and GrpE. It is the nucleotide exchange factor for DnaK and may function as a thermosensor. Unfolded proteins bind initially to DnaJ; upon interaction with the DnaJ-bound protein, DnaK hydrolyzes its bound ATP, resulting in the formation of a stable complex. GrpE releases ADP from DnaK; ATP binding to DnaK triggers the release of the substrate protein, thus completing the reaction cycle. Several rounds of ATP-dependent interactions between DnaJ, DnaK and GrpE are required for fully efficient folding. This is Protein GrpE from Pseudomonas fluorescens (strain Pf0-1).